The chain runs to 549 residues: Membrane protein insertase YidC (549 aa).

Residues 8-28 (VLLATVLSVAVLIVWQFVFPS) form a helical membrane-spanning segment. The span at 29 to 39 (PKPKPQPPKPP) shows a compositional bias: pro residues. Positions 29–68 (PKPKPQPPKPPEAAQRAEAPAAPAPGQPAAQAPAPAVPQD) are disordered. Composition is skewed to low complexity over residues 40–49 (EAAQRAEAPA) and 55–68 (QPAA…VPQD). 4 helical membrane-spanning segments follow: residues 328–348 (IDYG…LFVM), 354–374 (LVAN…VLLY), 424–444 (LGGC…YATL), and 502–522 (PGFF…YIFV).

It belongs to the OXA1/ALB3/YidC family. Type 1 subfamily. As to quaternary structure, interacts with the Sec translocase complex via SecD. Specifically interacts with transmembrane segments of nascent integral membrane proteins during membrane integration.

The protein localises to the cell inner membrane. Functionally, required for the insertion and/or proper folding and/or complex formation of integral membrane proteins into the membrane. Involved in integration of membrane proteins that insert both dependently and independently of the Sec translocase complex, as well as at least some lipoproteins. Aids folding of multispanning membrane proteins. The protein is Membrane protein insertase YidC of Anaeromyxobacter sp. (strain Fw109-5).